The sequence spans 41 residues: Cuticle protein 32 (41 aa).

4 repeat units span residues 17–20 (AAPA), 25–28 (AAPA), 31–34 (AAPA), and 38–41 (AAPA).

Its function is as follows. Component of the cuticle of migratory locust which contains more than 100 different structural proteins. This is Cuticle protein 32 from Locusta migratoria (Migratory locust).